Consider the following 200-residue polypeptide: MATQRVLPQSKETLLQSYNKRLKDDIKSILENFTEIIKTAKIEDETQVSRPAQAEQDHYEMHVRAANIVRAGESLMKLVSDLKQFLILNDFPSVNDAISLQNQQLRSLQEECDKKLISLRDEIAIDLYELEEEYYSSSYSQWDTDLPLCEAYHRVDNWASPSSSSSSTQGDQEEVEILPSQETEPQHHLNGQGTSSLEKM.

Residues 93-123 (SVNDAISLQNQQLRSLQEECDKKLISLRDEI) are a coiled coil. The disordered stretch occupies residues 159-200 (ASPSSSSSSTQGDQEEVEILPSQETEPQHHLNGQGTSSLEKM). The span at 189–200 (LNGQGTSSLEKM) shows a compositional bias: polar residues.

This sequence belongs to the Mediator complex subunit 22 family. Component of the Mediator complex.

The protein resides in the nucleus. In terms of biological role, component of the Mediator complex, a coactivator involved in the regulated transcription of nearly all RNA polymerase II-dependent genes. Mediator functions as a bridge to convey information from gene-specific regulatory proteins to the basal RNA polymerase II transcription machinery. Mediator is recruited to promoters by direct interactions with regulatory proteins and serves as a scaffold for the assembly of a functional preinitiation complex with RNA polymerase II and the general transcription factors. This Takifugu rubripes (Japanese pufferfish) protein is Mediator of RNA polymerase II transcription subunit 22 (med22).